The following is a 620-amino-acid chain: Long-chain fatty acid transport protein 2 (620 aa).

The Lumenal portion of the chain corresponds to 1–4 (MLPV). The helical transmembrane segment at 5–27 (LYTGLAGLLLLPLLLTCCCPYLL) threads the bilayer. Over 28-106 (QDVRFFLQLA…DHLGLRQGDC (79 aa)) the chain is Cytoplasmic. The chain crosses the membrane as a helical span at residues 107–127 (VALFMGNEPAYVWLWLGLLKL). Residues 128–267 (GCPMACLNYN…DVIYTTMPLY (140 aa)) are Lumenal-facing. 222 to 233 (YIYTSGTTGLPK) lines the AMP pocket. Residues 268–288 (HSAALMIGLHGCIVVGATFAL) form a helical membrane-spanning segment. The Cytoplasmic segment spans residues 289-620 (RSKFSASQFW…NAIIDKTLKL (332 aa)). Lys291 is modified (N6-acetyllysine). Thr577 carries the phosphothreonine modification.

This sequence belongs to the ATP-dependent AMP-binding enzyme family. Liver and kidney (at protein level).

It localises to the endoplasmic reticulum membrane. The protein resides in the peroxisome membrane. The protein localises to the cell membrane. Its subcellular location is the microsome. It catalyses the reaction a fatty acid(in) = a fatty acid(out). The enzyme catalyses (9Z)-octadecenoate(out) = (9Z)-octadecenoate(in). The catalysed reaction is a long-chain fatty acid + ATP + CoA = a long-chain fatty acyl-CoA + AMP + diphosphate. It carries out the reaction (5Z,8Z,11Z,14Z)-eicosatetraenoate + ATP + CoA = (5Z,8Z,11Z,14Z)-eicosatetraenoyl-CoA + AMP + diphosphate. It catalyses the reaction (9Z,12Z,15Z)-octadecatrienoate + ATP + CoA = (9Z,12Z,15Z)-octadecatrienoyl-CoA + AMP + diphosphate. The enzyme catalyses hexadecanoate + ATP + CoA = hexadecanoyl-CoA + AMP + diphosphate. The catalysed reaction is (9Z)-octadecenoate + ATP + CoA = (9Z)-octadecenoyl-CoA + AMP + diphosphate. It carries out the reaction 2,6,10,14-tetramethylpentadecanoate + ATP + CoA = pristanoyl-CoA + AMP + diphosphate. It catalyses the reaction (E)-hexadec-2-enoate + ATP + CoA = (2E)-hexadecenoyl-CoA + AMP + diphosphate. The enzyme catalyses 3,7,11,15-tetramethylhexadecanoate + ATP + CoA = phytanoyl-CoA + AMP + diphosphate. The catalysed reaction is a very long-chain fatty acid + ATP + CoA = a very long-chain fatty acyl-CoA + AMP + diphosphate. It carries out the reaction tetracosanoate + ATP + CoA = tetracosanoyl-CoA + AMP + diphosphate. It catalyses the reaction (4Z,7Z,10Z,13Z,16Z,19Z)-docosahexaenoate + ATP + CoA = (4Z,7Z,10Z,13Z,16Z,19Z)-docosahexaenoyl-CoA + AMP + diphosphate. The enzyme catalyses (25R)-3alpha,7alpha,12alpha-trihydroxy-5beta-cholestan-26-oate + ATP + CoA = (25R)-3alpha,7alpha,12alpha-trihydroxy-5beta-cholestan-26-oyl-CoA + AMP + diphosphate. In terms of biological role, mediates the import of long-chain fatty acids (LCFA) into the cell by facilitating their transport across cell membranes, playing an important role in hepatic fatty acid uptake. Also functions as an acyl-CoA ligase catalyzing the ATP-dependent formation of fatty acyl-CoA using LCFA and very-long-chain fatty acids (VLCFA) as substrates, which prevents fatty acid efflux from cells and might drive more fatty acid uptake. Plays a pivotal role in regulating available LCFA substrates from exogenous sources in tissues undergoing high levels of beta-oxidation or triglyceride synthesis. Can also activate branched-chain fatty acids such as phytanic acid and pristanic acid. May contribute to the synthesis of sphingosine-1-phosphate. Does not activate C24 bile acids, cholate and chenodeoxycholate. In vitro, activates 3-alpha,7-alpha,12-alpha-trihydroxy-5-beta-cholestanate (THCA), the C27 precursor of cholic acid deriving from the de novo synthesis from cholesterol. However, it is not critical for THCA activation and bile synthesis in vivo. The sequence is that of Long-chain fatty acid transport protein 2 (Slc27a2) from Rattus norvegicus (Rat).